Reading from the N-terminus, the 706-residue chain is Kinesin-like protein KIF2A (706 aa).

Positions 1-217 are globular; it reads MATANFGKIQ…LDYRPLTTAD (217 aa). A disordered region spans residues 66–139; that stretch reads LVPDEEIEPS…AQQNGSVSDI (74 aa). The residue at position 75 (Ser-75) is a Phosphoserine. 2 positions are modified to phosphothreonine: Thr-78 and Thr-97. The residue at position 100 (Ser-100) is a Phosphoserine. An N6-acetyllysine modification is found at Lys-102. A compositionally biased stretch (polar residues) spans 123–139; sequence FPEQSSSAQQNGSVSDI. 2 positions are modified to phosphoserine: Ser-135 and Ser-140. The interval 165–186 is disordered; it reads KLQEKREKRRLQQQELREKRAQ. The region spanning 223–553 is the Kinesin motor domain; the sequence is RICVCVRKRP…LRYANRVKEL (331 aa). 313–320 is a binding site for ATP; that stretch reads GQTGSGKT. A phosphoserine mark is found at Asp-556 and Gln-573. A coiled-coil region spans residues 660–699; that stretch reads ATQLEAILEQKIDILTELRDKVKSFRAALQEEEQASKQIN.

Belongs to the TRAFAC class myosin-kinesin ATPase superfamily. Kinesin family. MCAK/KIF2 subfamily. Interacts with AURKA and PLK1. Interacts with PSRC1. Interacts with MCRS1; the interaction enhances recruitment of KIF2A to the minus ends of spindle microtubules which promotes chromosome alignment.

Its subcellular location is the cytoplasm. The protein resides in the cytoskeleton. The protein localises to the microtubule organizing center. It localises to the centrosome. It is found in the spindle pole. Its subcellular location is the spindle. In terms of biological role, plus end-directed microtubule-dependent motor required for normal brain development. May regulate microtubule dynamics during axonal growth. Required for normal progression through mitosis. Required for normal congress of chromosomes at the metaphase plate. Required for normal spindle dynamics during mitosis. Promotes spindle turnover. Implicated in formation of bipolar mitotic spindles. Has microtubule depolymerization activity. The chain is Kinesin-like protein KIF2A (KIF2A) from Homo sapiens (Human).